A 237-amino-acid polypeptide reads, in one-letter code: Phosphoadenosine 5'-phosphosulfate reductase (237 aa).

The Nucleophile; cysteine thiosulfonate intermediate role is filled by C231.

This sequence belongs to the PAPS reductase family. CysH subfamily.

It is found in the cytoplasm. It catalyses the reaction [thioredoxin]-disulfide + sulfite + adenosine 3',5'-bisphosphate + 2 H(+) = [thioredoxin]-dithiol + 3'-phosphoadenylyl sulfate. The protein operates within sulfur metabolism; hydrogen sulfide biosynthesis; sulfite from sulfate: step 3/3. Functionally, catalyzes the formation of sulfite from phosphoadenosine 5'-phosphosulfate (PAPS) using thioredoxin as an electron donor. This chain is Phosphoadenosine 5'-phosphosulfate reductase, found in Xylella fastidiosa (strain 9a5c).